The sequence spans 165 residues: Pyruvoyl-dependent arginine decarboxylase 1 (165 aa).

Pyruvic acid (Ser) is present on S45.

It belongs to the PdaD family. Pyruvate is required as a cofactor.

It carries out the reaction L-arginine + H(+) = agmatine + CO2. The chain is Pyruvoyl-dependent arginine decarboxylase 1 (pdaD1) from Methanosarcina acetivorans (strain ATCC 35395 / DSM 2834 / JCM 12185 / C2A).